The following is a 461-amino-acid chain: METLFNGTLTVGGRDQESTGFAWWAGNARLINLSGKLLGAHVAHAGLIVYWAGAMNLFEVAHFVPEKPMYEQGLILLPHLATLGYGVGPGGEVIDTFPYFVSGVLHLISSAVLGFGGVYHSLIGPETLEESFPFFGYVWKDKNKMTNILGYHLIMLGIGAWLLVWKAMYFGGVYDTWAPGGGDVRIITNPTTNAAVVFGYLLKSPFGGDGWIVSVDNMEDIIGGHIWIGTLCILGGLWHIYTTPWPWARRAFVWSGEAYLSYSLGAISLMGFIACCMSWFNNTAYPSEFYGPTGPEASQSQAFTFLVRDQRLGANVASAQGPTGLGKYLMRSPTGEIIFGGETMRFWDFRGPWLEPLRGPNGLDLNKLKNDIQPWQERRAAEYMTHAPLGSLNSVGGVATEINAVNFVSPRSWLATSHFVLGFFFFVGHLWHAGRARAAAAGFEKGIDRLDEPVLSMRPLD.

Residues 1 to 2 (ME) constitute a propeptide that is removed on maturation. At threonine 3 the chain carries N-acetylthreonine. A Phosphothreonine modification is found at threonine 3. A run of 5 helical transmembrane segments spans residues 57–81 (LFEV…PHLA), 122–143 (LIGP…KDKN), 166–188 (KAMY…RIIT), 243–263 (TPWP…LSYS), and 279–300 (WFNN…ASQS). Glutamate 355 contacts [CaMn4O5] cluster. A helical membrane pass occupies residues 435–459 (RARAAAAGFEKGIDRLDEPVLSMRP).

The protein belongs to the PsbB/PsbC family. PsbC subfamily. PSII is composed of 1 copy each of membrane proteins PsbA, PsbB, PsbC, PsbD, PsbE, PsbF, PsbH, PsbI, PsbJ, PsbK, PsbL, PsbM, PsbT, PsbX, PsbY, PsbZ, Psb30/Ycf12, at least 3 peripheral proteins of the oxygen-evolving complex and a large number of cofactors. It forms dimeric complexes. Binds multiple chlorophylls and provides some of the ligands for the Ca-4Mn-5O cluster of the oxygen-evolving complex. It may also provide a ligand for a Cl- that is required for oxygen evolution. PSII binds additional chlorophylls, carotenoids and specific lipids. is required as a cofactor.

It localises to the plastid. It is found in the chloroplast thylakoid membrane. Its function is as follows. One of the components of the core complex of photosystem II (PSII). It binds chlorophyll and helps catalyze the primary light-induced photochemical processes of PSII. PSII is a light-driven water:plastoquinone oxidoreductase, using light energy to abstract electrons from H(2)O, generating O(2) and a proton gradient subsequently used for ATP formation. This is Photosystem II CP43 reaction center protein from Tetradesmus obliquus (Green alga).